Here is a 434-residue protein sequence, read N- to C-terminus: 3-phosphoshikimate 1-carboxyvinyltransferase (434 aa).

The 3-phosphoshikimate site is built by K15, S16, and R20. A phosphoenolpyruvate-binding site is contributed by K15. G96 and R124 together coordinate phosphoenolpyruvate. 3-phosphoshikimate-binding residues include S169, Q171, S195, D319, and K346. Position 171 (Q171) interacts with phosphoenolpyruvate. D319 (proton acceptor) is an active-site residue. Residues R350 and R394 each coordinate phosphoenolpyruvate.

Belongs to the EPSP synthase family. As to quaternary structure, monomer.

The protein resides in the cytoplasm. The enzyme catalyses 3-phosphoshikimate + phosphoenolpyruvate = 5-O-(1-carboxyvinyl)-3-phosphoshikimate + phosphate. The protein operates within metabolic intermediate biosynthesis; chorismate biosynthesis; chorismate from D-erythrose 4-phosphate and phosphoenolpyruvate: step 6/7. In terms of biological role, catalyzes the transfer of the enolpyruvyl moiety of phosphoenolpyruvate (PEP) to the 5-hydroxyl of shikimate-3-phosphate (S3P) to produce enolpyruvyl shikimate-3-phosphate and inorganic phosphate. The chain is 3-phosphoshikimate 1-carboxyvinyltransferase from Prosthecochloris aestuarii (strain DSM 271 / SK 413).